Reading from the N-terminus, the 516-residue chain is L-amino acid oxidase (516 aa).

Residues 1–18 form the signal peptide; sequence MNVFFMFSLLFLAALESC. Residues 61–62, 81–82, R89, and 105–108 each bind FAD; these read MS, EA, and GPMR. R108 is a binding site for substrate. The N-linked (GlcNAc...) asparagine glycan is linked to N190. V279 is an FAD binding site. N-linked (GlcNAc...) asparagine glycosylation is found at N299 and N404. A disulfide bridge connects residues C349 and C430. FAD is bound by residues E475 and 482 to 487; that span reads GWIDST. Residue 482 to 483 participates in substrate binding; that stretch reads GW.

Belongs to the flavin monoamine oxidase family. FIG1 subfamily. Homodimer; non-covalently linked. Requires FAD as cofactor. N-glycosylated (14%). The enzymatic activity remains unchanged after deglycosylation. Expressed by the venom gland.

It localises to the secreted. It catalyses the reaction an L-alpha-amino acid + O2 + H2O = a 2-oxocarboxylate + H2O2 + NH4(+). The enzyme catalyses L-leucine + O2 + H2O = 4-methyl-2-oxopentanoate + H2O2 + NH4(+). The catalysed reaction is L-phenylalanine + O2 + H2O = 3-phenylpyruvate + H2O2 + NH4(+). It carries out the reaction L-tryptophan + O2 + H2O = indole-3-pyruvate + H2O2 + NH4(+). It catalyses the reaction L-methionine + O2 + H2O = 4-methylsulfanyl-2-oxobutanoate + H2O2 + NH4(+). The enzyme catalyses L-isoleucine + O2 + H2O = (S)-3-methyl-2-oxopentanoate + H2O2 + NH4(+). Inhibited by the substrate analog N-acetyl tryptophan. Its function is as follows. Catalyzes an oxidative deamination of predominantly hydrophobic and aromatic L-amino acids, thus producing hydrogen peroxide that may contribute to the diverse toxic effects of this enzyme. Is highly active on L-Met&gt;L-Leu&gt;L-Phe&gt;L-Trp=L-Ile. Binds to the cell surface and enables the production of highly localized concentration of hydrogen peroxide in or near the binding interfaces. Does not bind to phospholipids. Induces platelet-rich plasma aggregation, shows cytotoxic effects on some cancer cell lines (B16-F10 (mouse melanoma), PC12 (rat pheochromocytoma), MCF-7 and MDA-MB-231 (human breast carcinoma)) and shows antibacterial activities against both Gram-positive and Gram-negative bacteria. Also exhibits hemorrhage and edema. Does not show cytotoxicity on erythrocytes and peripheral blood mononuclear cells. Its effect on platelets is controversial, since it either induces aggregation or inhibits agonist-induced aggregation. These different effects are probably due to different experimental conditions. The protein is L-amino acid oxidase of Cerastes cerastes (Horned desert viper).